Consider the following 274-residue polypeptide: Cytochrome c oxidase subunit 3 (274 aa).

Over 2-15 (AHVKNHDYQILPPS) the chain is Cytoplasmic. A helical transmembrane segment spans residues 16–36 (IWPFFGAIGAFVMLTGAVAWM). The Periplasmic segment spans residues 37–48 (KGITFFGLPVEG). The chain crosses the membrane as a helical span at residues 49 to 77 (PWMFLIGLVGVLYVMFGWWADVVNEGETG). Residues 78-79 (EH) are Cytoplasmic-facing. Residues 80-115 (TPVVRIGLQYGFILFIMSEVMFFVAWFWAFIKNALY) form a helical membrane-spanning segment. At 116–139 (PMGPDSPIKDGVWPPEGIVTFDPW) the chain is on the periplasmic side. The helical transmembrane segment at 140–166 (HLPLINTLILLLSGVAVTWAHHAFVLE) threads the bilayer. Topologically, residues 167–168 (GD) are cytoplasmic. A helical membrane pass occupies residues 169–197 (RKTTINGLIVAVILGVCFTGLQAYEYSHA). Topologically, residues 198–203 (AFGLAD) are periplasmic. A helical membrane pass occupies residues 204 to 237 (TVYAGAFYMATGFHGAHVIIGTIFLFVCLIRLLK). Residues 238–244 (GQMTQKQ) are Cytoplasmic-facing. Residues 245-274 (HVGFEAAAWYWHFVDVVWLFLFVVIYIWGR) form a helical membrane-spanning segment.

The protein belongs to the cytochrome c oxidase subunit 3 family.

It is found in the cell inner membrane. The catalysed reaction is 4 Fe(II)-[cytochrome c] + O2 + 8 H(+)(in) = 4 Fe(III)-[cytochrome c] + 2 H2O + 4 H(+)(out). This Paracoccus denitrificans protein is Cytochrome c oxidase subunit 3 (ctaE).